The chain runs to 240 residues: Prolactin-8A6 (240 aa).

Residues Met1–Ser30 form the signal peptide. 3 disulfides stabilise this stretch: Cys34-Cys41, Cys101-Cys216, and Cys233-Cys240. Asn212 is a glycosylation site (N-linked (GlcNAc...) asparagine).

The protein belongs to the somatotropin/prolactin family. In terms of tissue distribution, expressed specifically in the spongiotrophoblast and trophoblast giant cells from the junctional zone of the chorioallantoic placenta.

The protein localises to the secreted. The polypeptide is Prolactin-8A6 (Prl8a6) (Mus musculus (Mouse)).